The following is a 436-amino-acid chain: 3-ketoacyl-CoA thiolase (436 aa).

The active-site Acyl-thioester intermediate is the cysteine 99. Active-site proton acceptor residues include histidine 392 and cysteine 422.

It belongs to the thiolase-like superfamily. Thiolase family. As to quaternary structure, heterotetramer of two alpha chains (FadJ) and two beta chains (FadI).

It localises to the cytoplasm. The enzyme catalyses an acyl-CoA + acetyl-CoA = a 3-oxoacyl-CoA + CoA. The protein operates within lipid metabolism; fatty acid beta-oxidation. In terms of biological role, catalyzes the final step of fatty acid oxidation in which acetyl-CoA is released and the CoA ester of a fatty acid two carbons shorter is formed. In Salmonella paratyphi C (strain RKS4594), this protein is 3-ketoacyl-CoA thiolase.